The primary structure comprises 387 residues: Eukaryotic translation initiation factor 3 subunit M (387 aa).

A PCI domain is found at 181–340 (LSSKVMIELL…HKVHITSTMH (160 aa)).

This sequence belongs to the eIF-3 subunit M family. In terms of assembly, component of the eukaryotic translation initiation factor 3 (eIF-3) complex. The eIF-3 complex interacts with pix.

It is found in the cytoplasm. The protein resides in the golgi apparatus. In terms of biological role, component of the eukaryotic translation initiation factor 3 (eIF-3) complex, which is involved in protein synthesis of a specialized repertoire of mRNAs and, together with other initiation factors, stimulates binding of mRNA and methionyl-tRNAi to the 40S ribosome. The eIF-3 complex specifically targets and initiates translation of a subset of mRNAs involved in cell proliferation. This chain is Eukaryotic translation initiation factor 3 subunit M, found in Drosophila erecta (Fruit fly).